Reading from the N-terminus, the 467-residue chain is Ergochrome gene cluster transcriptional coactivator CPUR_05432 (467 aa).

Residues 109–179 (IAIQCEMLGS…RRGYVAHTPL (71 aa)) enclose the HTH iclR-type domain. Residues 139–158 (IQDVANLSNVPEQQLAQMIG) constitute a DNA-binding region (H-T-H motif).

It is found in the nucleus. Its function is as follows. Transcriptional coactivator; part of the gene cluster responsible for the typical purple-black color of the ergot sclerotia. The ergochrome gene cluster produces several ergot pigments including the yellow ergochrome secalonic acid and its derivatives, as well as the red anthraquinones endocrocin and clavorubin. With CPUR_05433, coregulates the production of geodin. This Claviceps purpurea (strain 20.1) (Ergot fungus) protein is Ergochrome gene cluster transcriptional coactivator CPUR_05432.